The chain runs to 180 residues: UPF0227 protein YcfP (180 aa).

It belongs to the UPF0227 family.

The chain is UPF0227 protein YcfP from Escherichia coli O9:H4 (strain HS).